Reading from the N-terminus, the 257-residue chain is Ribonuclease HII (257 aa).

Residues 71-257 (ELIAGIDEVG…EPIKSMVNFK (187 aa)) enclose the RNase H type-2 domain. Residues Asp77, Glu78, and Asp169 each contribute to the a divalent metal cation site.

Belongs to the RNase HII family. Mn(2+) is required as a cofactor. It depends on Mg(2+) as a cofactor.

It is found in the cytoplasm. The catalysed reaction is Endonucleolytic cleavage to 5'-phosphomonoester.. Functionally, endonuclease that specifically degrades the RNA of RNA-DNA hybrids. This Lactococcus lactis subsp. cremoris (strain MG1363) protein is Ribonuclease HII (rnhB).